The following is a 681-amino-acid chain: Envelope glycoprotein (681 aa).

A signal peptide spans 1–18; that stretch reads MKTIYFLISLILIQSIKT. The Extracellular portion of the chain corresponds to 19–648; it reads LPVLEIASNS…GLGGKWWTSD (630 aa). Residues 38–188 are receptor-binding; the sequence is SGTLQKTEDV…FSRQGQGYRH (151 aa). Asparagine 94, asparagine 171, asparagine 190, asparagine 202, asparagine 207, asparagine 219, and asparagine 223 each carry an N-linked (GlcNAc...) asparagine; by host glycan. The interval 223-428 is disordered; sequence NQTCPPSLKP…PDSSPTTRPP (206 aa). Composition is skewed to polar residues over residues 236–260 and 278–315; these read PTVT…MNPS and PHTT…TNPS. Residues 277–455 form a mucin-like region region; that stretch reads GPHTTLNVVT…PFLDGLINTE (179 aa). 10 N-linked (GlcNAc...) asparagine; by host glycosylation sites follow: asparagine 310, asparagine 323, asparagine 336, asparagine 350, asparagine 360, asparagine 364, asparagine 381, asparagine 397, asparagine 475, and asparagine 487. A compositionally biased stretch (low complexity) spans 327–347; that stretch reads PTTQPATLLNNTNTTPTYNTL. Composition is skewed to polar residues over residues 348–365 and 373–394; these read KYNL…TNND and SEQT…TTGQ. Over residues 395–428 the composition is skewed to low complexity; the sequence is DTNSTTNIIMTTSDITSKHPTNSSPDSSPTTRPP. Positions 529 to 549 are fusion peptide; it reads GLSWIPFFGPGIEGLYTAGLI. Residues asparagine 564 and asparagine 619 are each glycosylated (N-linked (GlcNAc...) asparagine; by host). A helical transmembrane segment spans residues 649–669; it reads WGVLTNLGILLLLSIAVLIAL. At 670-681 the chain is on the cytoplasmic side; sequence SCICRIFTKYIG. S-palmitoyl cysteine; by host attachment occurs at residues cysteine 671 and cysteine 673.

This sequence belongs to the filoviruses glycoprotein family. As to quaternary structure, homotrimer; each monomer consists of a GP1 and a GP2 subunit linked by disulfide bonds. The resulting peplomers (GP1,2) protrude from the virus surface as spikes. GP1,2 interacts with human CD209 and CLEC4M (collectively referred to as DC-SIGN(R)). Asialoglycoprotein receptor (ASGP-R) may be a liver-specific receptor for GP1,2. Members of the Tyro3 receptor tyrosine kinase family may be cell entry factors interacting with GP1,2. N-glycosylated. Post-translationally, O-glycosylated in the mucin-like region. In terms of processing, specific enzymatic cleavages in vivo yield mature proteins. The precursor is processed into GP1 and GP2 by host cell furin in the trans Golgi, and maybe by other host proteases, to yield the mature GP1 and GP2 proteins. The cleavage site corresponds to the furin optimal cleavage sequence [KR]-X-[KR]-R. GP1 is phosphorylated on serine residues between residues 260 and 273.

It is found in the virion membrane. The protein resides in the host cell membrane. Its function is as follows. GP1 is responsible for binding to the receptor(s) on target cells. Interacts with CD209/DC-SIGN and CLEC4M/DC-SIGNR which act as cofactors for virus entry into the host cell. Binding to CD209 and CLEC4M, which are respectively found on dendritic cells (DCs), and on endothelial cells of liver sinusoids and lymph node sinuses, facilitate infection of macrophages and endothelial cells. These interactions not only facilitate virus cell entry, but also allow capture of viral particles by DCs and subsequent transmission to susceptible cells without DCs infection (trans infection). In terms of biological role, GP2 acts as a class I viral fusion protein. Under the current model, the protein has at least 3 conformational states: pre-fusion native state, pre-hairpin intermediate state, and post-fusion hairpin state. During viral and target cell membrane fusion, the coiled coil regions (heptad repeats) assume a trimer-of-hairpins structure, positioning the fusion peptide in close proximity to the C-terminal region of the ectodomain. The formation of this structure appears to drive apposition and subsequent fusion of viral and target cell membranes. Responsible for penetration of the virus into the cell cytoplasm by mediating the fusion of the membrane of the endocytosed virus particle with the endosomal membrane. Low pH in endosomes induces an irreversible conformational change in GP2, releasing the fusion hydrophobic peptide. The polypeptide is Envelope glycoprotein (GP) (Chlorocebus aethiops (Green monkey)).